The primary structure comprises 105 residues: Imizoquin biosynthesis cluster protein I (105 aa).

Polar residues predominate over residues 1–15 (MSSGEPTTMTPSPSE). The segment at 1-43 (MSSGEPTTMTPSPSERTPLLSNGSGGAADDGGTTVTISKPNDG) is disordered.

It participates in secondary metabolite biosynthesis. Functionally, part of the gene cluster that mediates the biosynthesis of imizoquins A to D, tripeptide-derived alkaloids that serve a protective role against oxidative stress that are essential for normal germination. ImqB is a canonical three-module NRPS that assembles the tripeptide backbone of the imizoquins via condensation of Trp, Tyr, and Leu-derived precursors. N-methylation by imqF and phenol oxidation by imqC, followed by cyclization via the FAD-dependent oxidase imqH carry out the three-step transformation of L-tyrosine into tetrahydroisoquinoline. Importantly, this sequence requires the presence of a free amine in the tyrosine moiety, indicating that isoquinoline formation occurs prior to peptide bond formation. The imidazolidin-4-one ring of imizoquins could form following additional oxidation of the methyl-derived bridgehead carbon by imqH. Lastly, O-methylation by imqG and leucine hydroxylation by imqE complete biosynthesis of the imizoquins. The chain is Imizoquin biosynthesis cluster protein I from Aspergillus flavus (strain ATCC 200026 / FGSC A1120 / IAM 13836 / NRRL 3357 / JCM 12722 / SRRC 167).